We begin with the raw amino-acid sequence, 261 residues long: Indole-3-glycerol phosphate synthase (261 aa).

Belongs to the TrpC family.

It carries out the reaction 1-(2-carboxyphenylamino)-1-deoxy-D-ribulose 5-phosphate + H(+) = (1S,2R)-1-C-(indol-3-yl)glycerol 3-phosphate + CO2 + H2O. It functions in the pathway amino-acid biosynthesis; L-tryptophan biosynthesis; L-tryptophan from chorismate: step 4/5. This chain is Indole-3-glycerol phosphate synthase, found in Burkholderia ambifaria (strain MC40-6).